We begin with the raw amino-acid sequence, 520 residues long: Dihydropyrimidinase 2 (520 aa).

Residues H59, H61, and K152 each coordinate Zn(2+). K152 is subject to N6-carboxylysine. Y157 serves as a coordination point for substrate. The Zn(2+) site is built by H185 and H241. S291 is a binding site for substrate. Residue D319 participates in Zn(2+) binding. N340 is a substrate binding site.

It belongs to the metallo-dependent hydrolases superfamily. Hydantoinase/dihydropyrimidinase family. In terms of assembly, homotetramer. Zn(2+) is required as a cofactor. Post-translationally, carboxylation allows a single lysine to coordinate two zinc ions. In terms of tissue distribution, body wall muscles.

The catalysed reaction is 5,6-dihydrouracil + H2O = 3-(carbamoylamino)propanoate + H(+). In Caenorhabditis elegans, this protein is Dihydropyrimidinase 2 (dhp-2).